The chain runs to 529 residues: Na(+)/H(+) antiporter NhaB (529 aa).

A run of 12 helical transmembrane segments spans residues 13–33 (FLGK…IINP), 34–54 (IVFF…EFIF), 90–110 (LVAN…IYFM), 113–133 (LLLF…ILSL), 149–166 (LTVI…YSIY), 205–225 (LLMH…VGEP), 241–261 (FLIR…LTCF), 306–326 (GLIA…VGLI), 327–347 (GLSV…HSLG), 351–371 (EEAL…AVII), 451–471 (ATPN…APLI), and 479–499 (VIMA…GIVF).

The protein belongs to the NhaB Na(+)/H(+) (TC 2.A.34) antiporter family.

The protein localises to the cell inner membrane. It catalyses the reaction 2 Na(+)(in) + 3 H(+)(out) = 2 Na(+)(out) + 3 H(+)(in). Na(+)/H(+) antiporter that extrudes sodium in exchange for external protons. This Vibrio vulnificus (strain YJ016) protein is Na(+)/H(+) antiporter NhaB.